The following is an 830-amino-acid chain: Histone acetyltransferase KAT2A (830 aa).

The disordered stretch occupies residues 1 to 94 (MAEPSQAPNP…RKAQVRGLPR (94 aa)). Residue Ala-2 is modified to N-acetylalanine. Pro residues-rich tracts occupy residues 7–33 (APNP…PAPS) and 41–51 (APTPAPAPAPA). Over residues 58 to 69 (TGSGGAGVGSGG) the composition is skewed to gly residues. Basic residues predominate over residues 83 to 94 (SQRKAQVRGLPR). Phosphoserine is present on Ser-302. A compositionally biased stretch (low complexity) spans 398–417 (SFSPSMGGGSNSSLSLDSAG). Positions 398-426 (SFSPSMGGGSNSSLSLDSAGTEPMPAGEK) are disordered. Residues 496-649 (VIGNSLTPKA…GATLMECELN (154 aa)) form the N-acetyltransferase domain. Lys-542 is modified (N6-acetyllysine). Residue Glu-568 is the Proton donor/acceptor of the active site. Acetyl-CoA is bound by residues 572–574 (CAV), 579–585 (QVKGYGT), and Tyr-610. Succinyl-CoA-binding positions include 572–574 (CAV), 579–585 (QVKGYGT), and Tyr-610. Lys-721 participates in a covalent cross-link: Glycyl lysine isopeptide (Lys-Gly) (interchain with G-Cter in SUMO2). Positions 721 to 825 (KDPDQLYTTL…KFFYFKLKEG (105 aa)) constitute a Bromo domain. Thr-728 is subject to Phosphothreonine. Residues Lys-752 and Lys-784 each participate in a glycyl lysine isopeptide (Lys-Gly) (interchain with G-Cter in SUMO2) cross-link.

This sequence belongs to the acetyltransferase family. GCN5 subfamily. As to quaternary structure, interacts with EP300, CREBBP and ADA2. Component of the TFTC-HAT complex, at least composed of TAF5L, TAF6L, TAF3, TADA3L, SUPT3H/SPT3, TAF2/TAFII150, TAF4/TAFII135, TAF5/TAFII100, KAT2A/GCN5L2, TAF10 and TRRAP. Component of the STAGA transcription coactivator-HAT complex, at least composed of SUPT3H, KAT2A, SUPT7L, TAF5L, TAF6L, TADA3L, TAD1L, TAF10, TAF12, TRRAP and TAF9. The STAGA core complex is associated with a subcomplex required for histone deubiquitination composed of ATXN7L3, ENY2 and USP22. Component of the ADA2A-containing complex (ATAC), composed of KAT14, KAT2A, TADA2L, TADA3L, ZZ3, MBIP, WDR5, YEATS2, CCDC101 and DR1. In the complex, it probably interacts directly with KAT14, MBIP and WDR5. Interacts with PML. Interacts with CEBPB. Interacts with TACC1, TACC2 and TACC3. Interacts with RELA. Interacts with NFATC2. Interacts with TBX5. Interacts with PLK4. Associates with the 2-oxoglutarate dehydrogenase complex. Interacts with XPC; leading to KAT2A recruitment to promoters and subsequent acetylation of histones. Interacts with ERCC3/XPB; leading to KAT2A recruitment to promoters and subsequent acetylation of histones. Interacts with ISL1. Interactions of ISL1 with MLIP1 or KAT2A may be mutually exclusive. Post-translationally, acetylated at Lys-542, inhibiting the protein acetyltransferase activity. Deacetylation at Lys-542 by SIRT6 promotes phosphorylation at Ser-302 and Thr-728 and subsequent activation of the protein acetyltransferase activity, leading to acetylation and inactivation of PPARGC1A. As to expression, in brain, highly expressed in the hippocampal CA1 region (at protein level). Also expressed in the hippocampal subregions CA3 and the dentate gyrus as well as in the cortex and prefrontal cortex. Expressed at low level in the cerebellum.

It localises to the nucleus. The protein resides in the chromosome. It is found in the cytoplasm. Its subcellular location is the cytoskeleton. The protein localises to the microtubule organizing center. It localises to the centrosome. The catalysed reaction is L-lysyl-[histone] + acetyl-CoA = N(6)-acetyl-L-lysyl-[histone] + CoA + H(+). The enzyme catalyses L-lysyl-[protein] + acetyl-CoA = N(6)-acetyl-L-lysyl-[protein] + CoA + H(+). It catalyses the reaction succinyl-CoA + L-lysyl-[protein] = N(6)-succinyl-L-lysyl-[protein] + CoA + H(+). It carries out the reaction glutaryl-CoA + L-lysyl-[protein] = N(6)-glutaryl-L-lysyl-[protein] + CoA + H(+). Its function is as follows. Protein lysine acyltransferase that can act as a acetyltransferase, glutaryltransferase, succinyltransferase or malonyltransferase, depending on the context. Acts as a histone lysine succinyltransferase: catalyzes succinylation of histone H3 on 'Lys-79' (H3K79succ), with a maximum frequency around the transcription start sites of genes. Succinylation of histones gives a specific tag for epigenetic transcription activation. Association with the 2-oxoglutarate dehydrogenase complex, which provides succinyl-CoA, is required for histone succinylation. In different complexes, functions either as an acetyltransferase (HAT) or as a succinyltransferase: in the SAGA and ATAC complexes, acts as a histone acetyltransferase. Has significant histone acetyltransferase activity with core histones, but not with nucleosome core particles. Has a a strong preference for acetylation of H3 at 'Lys-9' (H3K9ac). Acetylation of histones gives a specific tag for epigenetic transcription activation. Recruited by the XPC complex at promoters, where it specifically mediates acetylation of histone variant H2A.Z.1/H2A.Z, thereby promoting expression of target genes. Involved in long-term memory consolidation and synaptic plasticity: acts by promoting expression of a hippocampal gene expression network linked to neuroactive receptor signaling. Acts as a positive regulator of T-cell activation: upon TCR stimulation, recruited to the IL2 promoter following interaction with NFATC2 and catalyzes acetylation of histone H3 at 'Lys-9' (H3K9ac), leading to promote IL2 expression. Required for growth and differentiation of craniofacial cartilage and bone by regulating acetylation of histone H3 at 'Lys-9' (H3K9ac). Regulates embryonic stem cell (ESC) pluripotency and differentiation. Also acetylates non-histone proteins, such as CEBPB, MRE11, PPARGC1A, PLK4 and TBX5. Involved in heart and limb development by mediating acetylation of TBX5, acetylation regulating nucleocytoplasmic shuttling of TBX5. Acts as a negative regulator of centrosome amplification by mediating acetylation of PLK4. Acts as a negative regulator of gluconeogenesis by mediating acetylation and subsequent inactivation of PPARGC1A. Also acts as a histone glutaryltransferase: catalyzes glutarylation of histone H4 on 'Lys-91' (H4K91glu), a mark that destabilizes nucleosomes by promoting dissociation of the H2A-H2B dimers from nucleosomes. This is Histone acetyltransferase KAT2A from Mus musculus (Mouse).